The sequence spans 468 residues: Cysteine--tRNA ligase (468 aa).

Cysteine 29 lines the Zn(2+) pocket. The 'HIGH' region signature appears at proline 31–asparagine 41. Cysteine 209, histidine 234, and glutamate 238 together coordinate Zn(2+). Positions lysine 266–serine 270 match the 'KMSKS' region motif. Lysine 269 is a binding site for ATP.

It belongs to the class-I aminoacyl-tRNA synthetase family. Monomer. The cofactor is Zn(2+).

It localises to the cytoplasm. The catalysed reaction is tRNA(Cys) + L-cysteine + ATP = L-cysteinyl-tRNA(Cys) + AMP + diphosphate. In Brevibacillus brevis (strain 47 / JCM 6285 / NBRC 100599), this protein is Cysteine--tRNA ligase.